The following is a 372-amino-acid chain: tRNA-specific 2-thiouridylase MnmA (372 aa).

Residues 9–16 (GMSGGVDS) and Met35 each bind ATP. Residues 95-97 (NPD) are interaction with target base in tRNA. Cys100 serves as the catalytic Nucleophile. The cysteines at positions 100 and 201 are disulfide-linked. Position 124 (Gly124) interacts with ATP. Residues 151–153 (KDQ) form an interaction with tRNA region. The active-site Cysteine persulfide intermediate is Cys201. The interval 317–318 (RY) is interaction with tRNA.

Belongs to the MnmA/TRMU family.

The protein localises to the cytoplasm. The catalysed reaction is S-sulfanyl-L-cysteinyl-[protein] + uridine(34) in tRNA + AH2 + ATP = 2-thiouridine(34) in tRNA + L-cysteinyl-[protein] + A + AMP + diphosphate + H(+). Its function is as follows. Catalyzes the 2-thiolation of uridine at the wobble position (U34) of tRNA, leading to the formation of s(2)U34. The protein is tRNA-specific 2-thiouridylase MnmA of Janthinobacterium sp. (strain Marseille) (Minibacterium massiliensis).